We begin with the raw amino-acid sequence, 721 residues long: MKPPASAIDALLDGTHADPFSLLGIHEGPDGAFARAVLPGAEEAVAWSLSGKKLGKLSRVDGRGLFEGKVKGPRQPVRYACKADGHEWLVTDPYSFGPVLGPLDDFLIAEGTHLRLFDKMGAHLIEHEGARGVHFAVWAPNARLVSVVGDFNDWDHRRHPMRRRADIGVWEIFIPDIGEHRAYKYRIVGHDGGVLPLKADPYALAAEFRPSTASLTAHPVKMDWADAAHRAHWASVDARREPMSIYEVHPGSWQKPHEEGFHTWDELADRLIPYVAEMGFTHIEFLPVSEHPYDPSWGYQTTGLYAPSARFGPPEGFARFVDGAHRAGISVLIDWVPAHFPTDEHGLVRFDGTALYEHEDPRLGFHPDWNTLIYNFGRREVVSFLVNNALFWAERYHVDGLRVDAVASMLYRDYSRKAGEWIPNAEGGRENWEAVEFLKAMNRAVYGSHAGFLTIAEESTAWPGVSKPAFDGAPRENLGFGFKWNMGFMHDTLKYMAREPIHRRYHHDEITFGLMYAFSENFVLPLSHDEVVHGKGSLLNKMSGDDWQKFANLRAYYGLMWGYPGKKLLFMGQEFAQRREWSEARALDWDLLQAPAHEGIRRWVRDLNRVYASRPALHARDCEPEGFEWLVVDDAEASIFAWLRKAPGARPVAVICNMTPQVHDHYRLPLPLDGEWREVLNSDAEDYGGSGIGNLGKVTAEQGAAFVVLPPLATLMLEFEG.

Residue D404 is the Nucleophile of the active site. The active-site Proton donor is the E457.

The protein belongs to the glycosyl hydrolase 13 family. GlgB subfamily. Monomer.

It catalyses the reaction Transfers a segment of a (1-&gt;4)-alpha-D-glucan chain to a primary hydroxy group in a similar glucan chain.. It participates in glycan biosynthesis; glycogen biosynthesis. Functionally, catalyzes the formation of the alpha-1,6-glucosidic linkages in glycogen by scission of a 1,4-alpha-linked oligosaccharide from growing alpha-1,4-glucan chains and the subsequent attachment of the oligosaccharide to the alpha-1,6 position. This Novosphingobium aromaticivorans (strain ATCC 700278 / DSM 12444 / CCUG 56034 / CIP 105152 / NBRC 16084 / F199) protein is 1,4-alpha-glucan branching enzyme GlgB.